The primary structure comprises 605 residues: ABC transporter E family member 2 (605 aa).

The 4Fe-4S ferredoxin-type domain maps to 46–75 (KLAFISEELCIGCGICVKKCPFEAIQIINL). ABC transporter domains follow at residues 70–315 (IQII…FLAG) and 344–568 (IQSY…LSHL). Residues 110–117 (GTNGIGKS) and 381–388 (GENGTGKT) each bind ATP.

The protein belongs to the ABC transporter superfamily. ABCE family. In terms of tissue distribution, expressed in roots, stems, leaves, flowers and siliques.

The protein localises to the membrane. The polypeptide is ABC transporter E family member 2 (ABCE2) (Arabidopsis thaliana (Mouse-ear cress)).